A 70-amino-acid polypeptide reads, in one-letter code: Large ribosomal subunit protein uL29 (70 aa).

It belongs to the universal ribosomal protein uL29 family.

This is Large ribosomal subunit protein uL29 from Clostridium novyi (strain NT).